We begin with the raw amino-acid sequence, 375 residues long: MTPIVFIDRDGTLIEEPPDFQIDAYEKLRLVNGVIPALLKLRDAGYHFVIVTNQDGLGSPAYPQASFDGPNALMLQIFSSQGIVFRDVLIDRSWPTDNAPTRKPGIGLMVAYLQDRDIDWARSAMVGDRPTDLQFAENLNIRGFQLRTPQFGGDWDWDGIAHTLADAPRRAVVQRHTKETTIRVEIDLDGAPQARITTGLPFFDHMLEQIAKHAGISLQISAVGDLHIDEHHTIEDTGLALGQAVRQALGDKRGIGRYGFDPPQLPWQVSGAAAHGGFTLPMDETQASAVLDFSGRPYCVFEGTFVRERVGDMPTELVPHFFRSLCDASGMNLHLSVHGDNDHHKVEACFKALARALRQALQRHGHVLPSTKGAL.

The interval 1-168 (MTPIVFIDRD…GIAHTLADAP (168 aa)) is histidinol-phosphatase. Catalysis depends on Asp-8, which acts as the Nucleophile. Mg(2+)-binding residues include Asp-8, Asp-10, and Asp-128. The active-site Proton donor is Asp-10. Positions 169-375 (RRAVVQRHTK…HVLPSTKGAL (207 aa)) are imidazoleglycerol-phosphate dehydratase.

This sequence in the N-terminal section; belongs to the histidinol-phosphatase family. The protein in the C-terminal section; belongs to the imidazoleglycerol-phosphate dehydratase family. Requires Mg(2+) as cofactor.

The protein localises to the cytoplasm. It carries out the reaction D-erythro-1-(imidazol-4-yl)glycerol 3-phosphate = 3-(imidazol-4-yl)-2-oxopropyl phosphate + H2O. The enzyme catalyses L-histidinol phosphate + H2O = L-histidinol + phosphate. Its pathway is amino-acid biosynthesis; L-histidine biosynthesis; L-histidine from 5-phospho-alpha-D-ribose 1-diphosphate: step 6/9. It participates in amino-acid biosynthesis; L-histidine biosynthesis; L-histidine from 5-phospho-alpha-D-ribose 1-diphosphate: step 8/9. The chain is Histidine biosynthesis bifunctional protein HisB from Xylella fastidiosa (strain 9a5c).